A 252-amino-acid polypeptide reads, in one-letter code: Thiazole synthase (252 aa).

The active-site Schiff-base intermediate with DXP is the K98. 1-deoxy-D-xylulose 5-phosphate-binding positions include G159, 185–186, and 207–208; these read AG and AS.

This sequence belongs to the ThiG family. Homotetramer. Forms heterodimers with either ThiH or ThiS.

It localises to the cytoplasm. The enzyme catalyses [ThiS sulfur-carrier protein]-C-terminal-Gly-aminoethanethioate + 2-iminoacetate + 1-deoxy-D-xylulose 5-phosphate = [ThiS sulfur-carrier protein]-C-terminal Gly-Gly + 2-[(2R,5Z)-2-carboxy-4-methylthiazol-5(2H)-ylidene]ethyl phosphate + 2 H2O + H(+). The protein operates within cofactor biosynthesis; thiamine diphosphate biosynthesis. Its function is as follows. Catalyzes the rearrangement of 1-deoxy-D-xylulose 5-phosphate (DXP) to produce the thiazole phosphate moiety of thiamine. Sulfur is provided by the thiocarboxylate moiety of the carrier protein ThiS. In vitro, sulfur can be provided by H(2)S. The sequence is that of Thiazole synthase from Mycobacterium tuberculosis (strain ATCC 25177 / H37Ra).